Reading from the N-terminus, the 287-residue chain is Phycobilisome 32.1 kDa linker polypeptide, phycocyanin-associated, rod (287 aa).

The region spanning 2-180 (AITAAASRLG…LYRGYANSDR (179 aa)) is the PBS-linker domain. In terms of domain architecture, CpcD-like spans 235–287 (GRVYRIEVAGIRQPGYPGVRRSSTAFLVPYEQLSAKMQQLQRTGARIISVNPA).

Belongs to the phycobilisome linker protein family.

It localises to the cellular thylakoid membrane. Its function is as follows. Rod linker protein, associated with phycocyanin. Linker polypeptides determine the state of aggregation and the location of the disk-shaped phycobiliprotein units within the phycobilisome and modulate their spectroscopic properties in order to mediate a directed and optimal energy transfer. The chain is Phycobilisome 32.1 kDa linker polypeptide, phycocyanin-associated, rod (cpcC) from Thermosynechococcus vestitus (strain NIES-2133 / IAM M-273 / BP-1).